A 77-amino-acid polypeptide reads, in one-letter code: Putative defensin-like protein 60 (77 aa).

The N-terminal stretch at 1–25 is a signal peptide; it reads MKMNITKSYVILFLVVVMTNSLSNS. 4 cysteine pairs are disulfide-bonded: C41/C75, C45/C68, C54/C73, and C58/C74.

Belongs to the DEFL family.

The protein localises to the secreted. This Arabidopsis thaliana (Mouse-ear cress) protein is Putative defensin-like protein 60.